A 141-amino-acid chain; its full sequence is Lysozyme 1 (141 aa).

An N-terminal signal peptide occupies residues 1–19 (MKFFIVLVAALALAAPAMG). The C-type lysozyme domain occupies 20-141 (KTFTRCSLAR…GSLPSINDCF (122 aa)). 4 disulfides stabilise this stretch: Cys25–Cys140, Cys46–Cys130, Cys81–Cys97, and Cys93–Cys111. Glu51 is an active-site residue. Asn65 carries an N-linked (GlcNAc...) asparagine glycan. Residue Asp69 is part of the active site. Asn104 carries an N-linked (GlcNAc...) asparagine glycan.

Belongs to the glycosyl hydrolase 22 family.

It catalyses the reaction Hydrolysis of (1-&gt;4)-beta-linkages between N-acetylmuramic acid and N-acetyl-D-glucosamine residues in a peptidoglycan and between N-acetyl-D-glucosamine residues in chitodextrins.. In terms of biological role, may not function as a self-defense protein, but as a digestive enzyme, probably in the gut of the insect body. Inactive towards Micrococcus luteus. Active toward glycol chitin. The protein is Lysozyme 1 of Musca domestica (House fly).